Consider the following 423-residue polypeptide: Serine--tRNA ligase (423 aa).

231-233 (TAE) provides a ligand contact to L-serine. 262 to 264 (RSE) contributes to the ATP binding site. Glu285 is a binding site for L-serine. ATP is bound at residue 349–352 (EISS). Residue Ser384 participates in L-serine binding.

The protein belongs to the class-II aminoacyl-tRNA synthetase family. Type-1 seryl-tRNA synthetase subfamily. Homodimer. The tRNA molecule binds across the dimer.

Its subcellular location is the cytoplasm. The catalysed reaction is tRNA(Ser) + L-serine + ATP = L-seryl-tRNA(Ser) + AMP + diphosphate + H(+). It catalyses the reaction tRNA(Sec) + L-serine + ATP = L-seryl-tRNA(Sec) + AMP + diphosphate + H(+). It participates in aminoacyl-tRNA biosynthesis; selenocysteinyl-tRNA(Sec) biosynthesis; L-seryl-tRNA(Sec) from L-serine and tRNA(Sec): step 1/1. Its function is as follows. Catalyzes the attachment of serine to tRNA(Ser). Is also able to aminoacylate tRNA(Sec) with serine, to form the misacylated tRNA L-seryl-tRNA(Sec), which will be further converted into selenocysteinyl-tRNA(Sec). The protein is Serine--tRNA ligase of Acinetobacter baumannii (strain AB307-0294).